The sequence spans 247 residues: Probable transcriptional regulatory protein Gura_1416 (247 aa).

The protein belongs to the TACO1 family.

The protein resides in the cytoplasm. This Geotalea uraniireducens (strain Rf4) (Geobacter uraniireducens) protein is Probable transcriptional regulatory protein Gura_1416.